Reading from the N-terminus, the 305-residue chain is Heterogeneous nuclear ribonucleoprotein A0 (305 aa).

Met1 carries the N-acetylmethionine modification. Positions Cys7–Glu86 constitute an RRM 1 domain. A Phosphoserine modification is found at Ser68. A Glycyl lysine isopeptide (Lys-Gly) (interchain with G-Cter in SUMO2) cross-link involves residue Lys80. Ser84 is subject to Phosphoserine; by MAPKAPK2. Glycyl lysine isopeptide (Lys-Gly) (interchain with G-Cter in SUMO2) cross-links involve residues Lys96, Lys98, Lys99, and Lys106. The RRM 2 domain occupies Lys98–Pro175. Lys133 bears the N6-acetyllysine mark. At Arg139 the chain carries Omega-N-methylarginine. Residues Lys154, Lys159, Lys172, and Lys176 each participate in a glycyl lysine isopeptide (Lys-Gly) (interchain with G-Cter in SUMO2) cross-link. Disordered stretches follow at residues Asp178–Asn211 and Gln265–Phe305. Composition is skewed to gly residues over residues Ala181–Asn211 and Lys272–Gly284. Arg286 bears the Omega-N-methylarginine mark. Residues Tyr292–Phe305 are compositionally biased toward gly residues. Position 293 is an asymmetric dimethylarginine; alternate (Arg293). Arg293 carries the post-translational modification Dimethylated arginine; alternate. Position 293 is an omega-N-methylarginine; alternate (Arg293).

In terms of processing, phosphorylated at Ser-84 by MAPKAPK2 in response to LPS treatment, promoting stabilization of GADD45A mRNA. Arg-293 is dimethylated, probably to asymmetric dimethylarginine.

The protein resides in the nucleus. In terms of biological role, mRNA-binding component of ribonucleosomes. Specifically binds AU-rich element (ARE)-containing mRNAs. Involved in post-transcriptional regulation of cytokines mRNAs. This chain is Heterogeneous nuclear ribonucleoprotein A0 (Hnrnpa0), found in Mus musculus (Mouse).